The primary structure comprises 223 residues: Protein disulfide-isomerase-like protein EhSep2 (223 aa).

The signal sequence occupies residues 1-17 (MALRSLTLLCAAAGASA). Residues 18-125 (GAIELTPDNF…DELKKFAENE (108 aa)) form the Thioredoxin domain. Position 47 (Sec-47) is a non-standard amino acid, selenocysteine. Positions 155–201 (EKRTEMLETLKKELADAESTHEALLKELQATYKESMDKLEKLKEESA) form a coiled coil. The disordered stretch occupies residues 201 to 223 (APKIKLLKAATPAPKAEGAKDEV). The segment covering 203–216 (KIKLLKAATPAPKA) has biased composition (low complexity). The short motif at 220–223 (KDEV) is the Prevents secretion from ER element.

The protein belongs to the protein disulfide isomerase family.

Its subcellular location is the endoplasmic reticulum lumen. This Emiliania huxleyi (Coccolithophore) protein is Protein disulfide-isomerase-like protein EhSep2 (SEP2).